The primary structure comprises 89 residues: MKTSVMFMLVFVISLMCSSEAQEVARTYCGRHLADTLADLCFGVEKRSGAQYAPYFWTRQYLGSRGKRGVVDECCFRPCTLDVLLSYCG.

Residues 1–19 form the signal peptide; sequence MKTSVMFMLVFVISLMCSS. Disulfide bonds link Cys-29–Cys-75, Cys-41–Cys-88, and Cys-74–Cys-79. Positions 48 to 66 are cleaved as a propeptide — c peptide like; sequence SGAQYAPYFWTRQYLGSRG.

It belongs to the insulin family. As to quaternary structure, heterodimer of a B chain and an A chain linked by two disulfide bonds.

It is found in the secreted. Functionally, brain peptide responsible for activation of prothoracic glands to produce ecdysone in insects. In Bombyx mori (Silk moth), this protein is Bombyxin B-2 (BBXB2).